The primary structure comprises 1038 residues: SEH-associated protein 4 (1038 aa).

The WD 1 repeat unit spans residues 50-90; it reads KDFGSITCLDYSESEIGMIGVGEKNGYLRIFNISGQNSSSP. 2 positions are modified to phosphoserine: S123 and S136. 3 WD repeats span residues 147 to 189, 235 to 276, and 544 to 587; these read KKQR…DSHE, QHPT…DQAS, and NTWR…SNQD.

It belongs to the WD repeat mio family. As to quaternary structure, component of the SEA complex composed of at least IML1/SEA1, RTC1/SEA2, MTC5/SEA3, NPR2, NPR3, SEA4, SEC13 and SEH1.

The protein resides in the cytoplasm. The protein localises to the vacuole membrane. Its function is as follows. Component of the SEA complex which coats the vacuolar membrane and is involved in intracellular trafficking, autophagy, response to nitrogen starvation, and amino acid biogenesis. This is SEH-associated protein 4 (SEA4) from Saccharomyces cerevisiae (strain ATCC 204508 / S288c) (Baker's yeast).